The primary structure comprises 227 residues: A-type potassium channel modulatory protein KCNIP1 (227 aa).

The region spanning 38 to 94 is the EF-hand 1; degenerate domain; sequence LEMTMVCHRPEGLEQLEAQTNFTKRELQVLYRGFKNECPSGVVNEETFKQIYAQFFP. EF-hand domains follow at residues 97 to 132, 133 to 168, and 181 to 216; these read DAST…LLRG, TVHE…IYDM, and TPRQ…DDNI. Asp146, Asn148, Asp150, Tyr152, Glu157, Asp194, Asn196, Asp198, and Glu205 together coordinate Ca(2+). The interval 214-227 is interaction with KCND2; it reads DNIMRSLQLFQNVM.

The protein belongs to the recoverin family. Component of heteromultimeric potassium channels. Identified in potassium channel complexes containing KCND1, KCND2, KCND3, KCNIP1, KCNIP2, KCNIP3, KCNIP4, DPP6 and DPP10. Part of a heterooctamer composed of the tetrameric channel and four KCNIP1 chains. Probably part of a complex consisting of KCNIP1, KCNIP2 isoform 3 and KCND2. Self-associates to form homodimers and homotetramers. Interacts with KCNIP2 isoform 3 in a calcium-dependent manner. Interacts with KCND2; this interaction mediates the capture of both the N- and C-terminus of KCND2, thus preventing KCND2 N-type inactivation and modulates the channel gating kinetics. Interacts with KCND3; each KCNIP1 monomer interacts with two adjacent KCND3 subunits, through both the N-terminal inactivation ball of a KCND3 subunit and a C-terminal helix from the adjacent KCND3 subunit, clamping them together; this interaction stabilizes the tetrameric form and modulates the channel gating kinetics namely channel activation and inactivation kinetics and rate of recovery from inactivation. In terms of tissue distribution, expressed in brain. Found in a subpopulation of neurons widely distributed and enriched in Purkinje cells of the cerebellum and in the reticular thalamic and medial habenular nuclei.

It is found in the cell membrane. The protein resides in the cytoplasm. It localises to the cell projection. The protein localises to the dendrite. Regulatory subunit of Kv4/D (Shal)-type voltage-gated rapidly inactivating A-type potassium channels. Regulates channel density, inactivation kinetics and rate of recovery from inactivation in a calcium-dependent and isoform-specific manner. Modulates KCND2/Kv4.2 currents. In vitro, modulates KCND1/Kv4.1 currents. Increases the presence of KCND2 at the cell surface. The protein is A-type potassium channel modulatory protein KCNIP1 of Mus musculus (Mouse).